A 514-amino-acid polypeptide reads, in one-letter code: MKPAHAAASWRNPLRDKRDKRLPRIAGPCGMVIFGVTGDLARKKVMPAVYDLANRGLLPPTFSLVGFARRDWSTQDFGQVVYNAVQEHCRTPFRQQNWDRLAEGFRFVPGTFDDDDAFAQLAETLEKLDAERGTGGNHAFYLAIPPKSFPVVCEQLHKSGLARPQGDRWSRVVIEKPFGHDLASARELNKAVNAVFPEEAVFRIDHYLGKETVQNILALRFANQLFDPIWNAHYVDHVQITMAEDIGLGGRAGYYDGIGAARDVIQNHLMQLLALTAMEEPVSFHPAALQAEKIKVLSATRLAEPLDQTTSRGQYAAGWQGGEKVVGLLDEEGFAEDSTTETFAAITLEVDTRRWAGVPFYLRTGKRLGRRVTEIALVFRRAPHLPFDATMTDELGTNAMVIRVQPDEGVTLRFGSKVPGTAMEVRDVNMDFSYGSAFAEDSPEAYERLILDVLLGEPSLFPVNAEVELAWEILDPALEHWAAHGTPDAYEAGTWGPESSLEMLRRTGREWRRP.

Positions 69 and 176 each coordinate NADP(+). The substrate site is built by H206, K210, E244, and D263. H268 (proton acceptor) is an active-site residue. A substrate-binding site is contributed by K366.

This sequence belongs to the glucose-6-phosphate dehydrogenase family.

It carries out the reaction D-glucose 6-phosphate + NADP(+) = 6-phospho-D-glucono-1,5-lactone + NADPH + H(+). It participates in carbohydrate degradation; pentose phosphate pathway; D-ribulose 5-phosphate from D-glucose 6-phosphate (oxidative stage): step 1/3. Catalyzes the oxidation of glucose 6-phosphate to 6-phosphogluconolactone. This Mycobacterium bovis (strain ATCC BAA-935 / AF2122/97) protein is Glucose-6-phosphate 1-dehydrogenase 2.